The sequence spans 333 residues: Malate dehydrogenase (333 aa).

NAD(+) contacts are provided by residues 10–15 (GGGQIG) and Asp34. Arg83 and Arg89 together coordinate substrate. Residues Asn96 and 119–121 (ITN) each bind NAD(+). Positions 121 and 152 each coordinate substrate. His176 serves as the catalytic Proton acceptor.

The protein belongs to the LDH/MDH superfamily. MDH type 3 family.

It catalyses the reaction (S)-malate + NAD(+) = oxaloacetate + NADH + H(+). Functionally, catalyzes the reversible oxidation of malate to oxaloacetate. The chain is Malate dehydrogenase from Parvibaculum lavamentivorans (strain DS-1 / DSM 13023 / NCIMB 13966).